We begin with the raw amino-acid sequence, 336 residues long: Inositol 2-dehydrogenase (336 aa).

Belongs to the Gfo/Idh/MocA family. In terms of assembly, homotetramer.

It catalyses the reaction myo-inositol + NAD(+) = scyllo-inosose + NADH + H(+). Its function is as follows. Involved in the oxidation of myo-inositol (MI) to 2-keto-myo-inositol (2KMI or 2-inosose). The polypeptide is Inositol 2-dehydrogenase (Paracoccus denitrificans (strain Pd 1222)).